The primary structure comprises 1034 residues: Mediator of RNA polymerase II transcription subunit 15 (1034 aa).

Composition is skewed to low complexity over residues 101-123 (QRQQQQQQQQHHMQQQGSGQQQA), 138-149 (QQAQARQQAQRQ), 157-183 (QQQQQPMPQQPQPQQQQPNMMRPQLTL), 281-312 (MNQVPQQQQQVRQQQQQQQQQQQQQHKQQPQH), 413-441 (QQIPQVQQAPLQQPQVQPPQSQQAQSRRQ), 459-490 (PQPQQTPQNIQQPMMQQQSSPPPQQQQQQQQQ), and 655-675 (QSQTQEPPQIAAQQQQPQQPI). Disordered stretches follow at residues 101–124 (QRQQQQQQQQHHMQQQGSGQQQAN), 138–183 (QQAQ…QLTL), 281–315 (MNQVPQQQQQVRQQQQQQQQQQQQQHKQQPQHQEP), 413–497 (QQIP…SVPR), 655–682 (QSQTQEPPQIAAQQQQPQQPISGVNNNS), 712–804 (SAIS…NPYK), and 951–1020 (ISPT…ESTD). Composition is skewed to polar residues over residues 738–764 (NSQSGIPTSNPQSNSNASVVNSRTATP) and 772–802 (PMFNNKSLASGQQNSPSPKTMINSPPQQDNP). A compositionally biased stretch (basic and acidic residues) spans 962–971 (SESKKVKFDS). Polar residues predominate over residues 998-1020 (SINSKPSIPSSAGNMPAPNESTD).

It belongs to the Mediator complex subunit 15 family. In terms of assembly, component of the Mediator complex.

It localises to the nucleus. Component of the Mediator complex, a coactivator involved in the regulated transcription of nearly all RNA polymerase II-dependent genes. Mediator functions as a bridge to convey information from gene-specific regulatory proteins to the basal RNA polymerase II transcription machinery. Mediator is recruited to promoters by direct interactions with regulatory proteins and serves as a scaffold for the assembly of a functional preinitiation complex with RNA polymerase II and the general transcription factors. Required for transcription of genes encoding galactose-metabolizing enzymes. Essential for normal growth on nonfermentable carbon sources, for sporulation and mating. The polypeptide is Mediator of RNA polymerase II transcription subunit 15 (GAL11) (Kluyveromyces lactis (strain ATCC 8585 / CBS 2359 / DSM 70799 / NBRC 1267 / NRRL Y-1140 / WM37) (Yeast)).